The following is a 658-amino-acid chain: MLARSRVCLQTITRRLADFPEANAIKKKFLFRKDTSTIKQLKGLSSGQKIVLNGWIEQKPKRVGKNLIFGLLRDSNGDIIQLVDNKSLLKGFTLEDVVQAVGILSLKRKLSNEDADEYEVQLEDITVLNASNKKPAQMQDFKLSAIYPPEFRYLQLRNPKYQDFLKKRSSISKEIRNSFNNFDFTEVETPMLFKATPEGAREFLVPTRTKRSDGKPSFYALDQSPQQYKQLLMASGVNKYYQMARCFRDEDLRADRQPEFTQVDMEMAFANSEDVMKIIEKTVSGVWSKFSKKRGLLTLDSKGTLVPAKKENGTVSIFRMTYEQAMTSYGIDKPDLRAPDLKIINLGEFNAFSHLNKKFPVFEVIILRSAFSNMEEYKERWSFLTNNSNYNYRVPIVLPIENDEQANSNWFENFHAIATFENPHLITKFLKLKKGDIVCGCTREPNHSIFENPTPLGRLRQLVLQSEHGKNIYHAVNKDVASWIVDFPLFSPVIIEDKSGKKEKLAYPEYEKDRLCSTHHPFTMVKLKDYEKLEKTPEKCLGRHYDLVVNGVELGGGSTRIHDPRLQDYIFEDILKIDNAYELFGHLLNAFDMGTPPHAGFAIGFDRMCAMICETESIRDVIAFPKSITGADLVVKSPSVIPESILEPYNIKYSNSKK.

Residue E198 coordinates L-aspartate. Positions 226–229 (QQYK) are aspartate. R248 serves as a coordination point for L-aspartate. Residues 248–250 (RDE) and E553 each bind ATP. An L-aspartate-binding site is contributed by R560. An ATP-binding site is contributed by 604–607 (GFDR).

The protein belongs to the class-II aminoacyl-tRNA synthetase family. Type 1 subfamily.

It localises to the mitochondrion matrix. The enzyme catalyses tRNA(Asp) + L-aspartate + ATP = L-aspartyl-tRNA(Asp) + AMP + diphosphate. Its function is as follows. Catalyzes the attachment of aspartate to tRNA(Asp) in the mitochondrion. In Saccharomyces cerevisiae (strain ATCC 204508 / S288c) (Baker's yeast), this protein is Aspartate--tRNA ligase, mitochondrial (MSD1).